Consider the following 470-residue polypeptide: Nuclear receptor subfamily 0 group B member 1 (470 aa).

Tandem repeats lie at residues 1-67, 68-133, and 134-200. The interval 1–253 is 4 X 67 AA tandem repeats; the sequence is MAGENHQWQG…RPVALKNPQV (253 aa). 3 short sequence motifs (LXXLL motif) span residues 13 to 17, 80 to 84, and 146 to 150; these read LYNML, LYSML, and LYSLL. The 4; truncated repeat unit spans residues 201-253; it reads FCGEDHPQQGSTLYCMPTSTNQAQAAPEERPRAPWWDTSSGALRPVALKNPQV. The region spanning 205–469 is the NR LBD domain; sequence DHPQQGSTLY…DMMLEMLCTK (265 aa). The AF-2 motif motif lies at 461–466; it reads MMLEML.

The protein belongs to the nuclear hormone receptor family. NR0 subfamily. As to quaternary structure, homodimer. Interacts with NR5A1, NR5A2, NR0B2 and with COPS2. Interacts with ESRRB; represses ESRRB activity at the GATA6 promoter.

The protein resides in the nucleus. It is found in the cytoplasm. Its function is as follows. Nuclear receptor that lacks a DNA-binding domain and acts as a corepressor that inhibits the transcriptional activity of other nuclear receptors through heterodimeric interactions. Component of a cascade required for the development of the hypothalamic-pituitary-adrenal-gonadal axis. May also have a role in the development of the embryo and in the maintenance of embryonic stem cell pluripotency. In Macaca mulatta (Rhesus macaque), this protein is Nuclear receptor subfamily 0 group B member 1 (NR0B1).